Consider the following 76-residue polypeptide: Gallerimycin (76 aa).

Positions 1-19 (MKIAFIVAISLAFLAVTSC) are cleaved as a signal peptide.

It belongs to the invertebrate defensin family.

Has antifungal activity against the entomopathogenic fungus M.nisopliae, but does not display any antifungal activity against S.cerevisiae nor any antimicrobial activity against M.luteus, B.subtilis, and E.coli. This is Gallerimycin (LOC113523440) from Galleria mellonella (Greater wax moth).